The primary structure comprises 223 residues: RNA-free ribonuclease P (223 aa).

Belongs to the HARP family.

It carries out the reaction Endonucleolytic cleavage of RNA, removing 5'-extranucleotides from tRNA precursor.. RNA-free RNase P that catalyzes the removal of the 5'-leader sequence from pre-tRNA to produce the mature 5'-terminus. This Methanococcus maripaludis (strain C6 / ATCC BAA-1332) protein is RNA-free ribonuclease P.